Here is a 201-residue protein sequence, read N- to C-terminus: Large ribosomal subunit protein bL25 (201 aa).

A disordered region spans residues A181 to E201. Residues S185–T194 are compositionally biased toward acidic residues.

The protein belongs to the bacterial ribosomal protein bL25 family. CTC subfamily. As to quaternary structure, part of the 50S ribosomal subunit; part of the 5S rRNA/L5/L18/L25 subcomplex. Contacts the 5S rRNA. Binds to the 5S rRNA independently of L5 and L18.

In terms of biological role, this is one of the proteins that binds to the 5S RNA in the ribosome where it forms part of the central protuberance. This chain is Large ribosomal subunit protein bL25, found in Thermoanaerobacter pseudethanolicus (strain ATCC 33223 / 39E) (Clostridium thermohydrosulfuricum).